The chain runs to 440 residues: T-box transcription factor TBX20 (440 aa).

The segment at residues 103–282 is a DNA-binding region (T-box); sequence LWDKFHDLGT…SNPFAKGFRD (180 aa).

The protein resides in the nucleus. Its function is as follows. Transcriptional regulator that may be involved in heart developmental processes. This chain is T-box transcription factor TBX20 (tbx20), found in Xenopus tropicalis (Western clawed frog).